The chain runs to 250 residues: Ribonuclease HII (250 aa).

The RNase H type-2 domain maps to 66–250 (QLVAGVDEVG…TFAPVSDFFK (185 aa)). A divalent metal cation-binding residues include aspartate 72, glutamate 73, and aspartate 164.

The protein belongs to the RNase HII family. Mn(2+) serves as cofactor. It depends on Mg(2+) as a cofactor.

The protein resides in the cytoplasm. The catalysed reaction is Endonucleolytic cleavage to 5'-phosphomonoester.. In terms of biological role, endonuclease that specifically degrades the RNA of RNA-DNA hybrids. This chain is Ribonuclease HII, found in Lactobacillus acidophilus (strain ATCC 700396 / NCK56 / N2 / NCFM).